A 423-amino-acid chain; its full sequence is MSYVIDRRLNGKNKSTVNRQRFLRRYRDHIKKAVEEAVSRRSITDMEHGEQISIPGRDIDEPVLHHGRGGKQTVVHPGNKEFTTGEHIARPQGGGGGKGPGKAGNSGEGMDEFSFQITQEEFLEFMFEDLELPNLVKRNLTGTDTFKTVRAGISNEGNPSRINIIRTLRSAHARRIALSGSSRAKLREATAELERMKREEPDNFGDIQELEVEIDRLKARIRRVPYLDTFDLKYNLLVKQPNPSSKAVMFCLMDVSGSMTQATKDIAKRFFILLYLFLKRNYDKIDVVFIRHHTSAREVDEEEFFYSRETGGTIVSSALKLMQEIMAARYPSSDWNIYAAQASDGDNWNDDSPICREILTKQIMPFVQYYTYVEITPREHQALWYEYERIGEDFADTFAQQQLVSAGDIYPVFRELFQRRLVS.

The interval 65 to 110 (HHGRGGKQTVVHPGNKEFTTGEHIARPQGGGGGKGPGKAGNSGEGM) is disordered. Residues 92–107 (QGGGGGKGPGKAGNSG) show a composition bias toward gly residues.

This sequence belongs to the UPF0229 family.

In Pseudomonas syringae pv. syringae (strain B728a), this protein is UPF0229 protein Psyr_4632.